The following is a 135-amino-acid chain: Lactoylglutathione lyase (135 aa).

The 125-residue stretch at 2-126 (RLLHTMLRVG…DGYKIELIEE (125 aa)) folds into the VOC domain. A Ni(2+)-binding site is contributed by His5. Arg9 lines the substrate pocket. Glu56 serves as a coordination point for Ni(2+). 2 residues coordinate substrate: Asn60 and His74. Ni(2+) is bound by residues His74 and Glu122. Residue Glu122 is the Proton donor/acceptor of the active site.

It belongs to the glyoxalase I family. As to quaternary structure, homodimer. Ni(2+) serves as cofactor.

The enzyme catalyses (R)-S-lactoylglutathione = methylglyoxal + glutathione. The protein operates within secondary metabolite metabolism; methylglyoxal degradation; (R)-lactate from methylglyoxal: step 1/2. Its function is as follows. Catalyzes the conversion of hemimercaptal, formed from methylglyoxal and glutathione, to S-lactoylglutathione. This chain is Lactoylglutathione lyase (gloA), found in Escherichia coli O157:H7.